The chain runs to 300 residues: Small ribosomal subunit protein uS4m (300 aa).

The 64-residue stretch at 146–209 (KRVDMVLLRS…MKRKLLKRLK (64 aa)) folds into the S4 RNA-binding domain.

The protein belongs to the universal ribosomal protein uS4 family.

It localises to the mitochondrion. This is Small ribosomal subunit protein uS4m (mrps4) from Dictyostelium discoideum (Social amoeba).